Consider the following 160-residue polypeptide: Cytosolic iron-sulfur assembly component 2A (160 aa).

Residues His-89, His-123, Glu-150, and Glu-153 each contribute to the Zn(2+) site.

The protein belongs to the MIP18 family. Monomer and homodimer. Component of the CIA complex. Interacts with CIAO1. Interacts with IREB2. Interacts with APAF1. Substantially enriched in macrophages.

Its subcellular location is the cytoplasm. Functionally, component of the cytosolic iron-sulfur protein assembly (CIA) complex, a multiprotein complex that mediates the incorporation of iron-sulfur cluster into extramitochondrial Fe/S proteins. As a CIA complex component and in collaboration with CIAO1 specifically matures ACO1 and stabilizes IREB2, connecting cytosolic iron-sulfur protein maturation with cellular iron regulation. May play a role in chromosome segregation through establishment of sister chromatid cohesion. May induce apoptosis in collaboration with APAF1. The polypeptide is Cytosolic iron-sulfur assembly component 2A (Homo sapiens (Human)).